The following is a 380-amino-acid chain: NADPH oxidoreductase (380 aa).

In terms of domain architecture, FAD-binding FR-type spans 58–164 (ARELRGRILG…AAPQGNFVLP (107 aa)). A 2Fe-2S ferredoxin-type domain is found at 299–380 (GTVTFARSGK…AASGDCVLDI (82 aa)). C333, C338, C341, and C368 together coordinate [2Fe-2S] cluster.

As to quaternary structure, interacts with DesA3 to form a functional acyl-CoA desaturase complex. [2Fe-2S] cluster serves as cofactor. FAD is required as a cofactor.

Its subcellular location is the cell membrane. It functions in the pathway lipid metabolism; fatty acid metabolism. Is likely involved in the aerobic desaturation system responsible for the synthesis of oleic acid from stearoyl-CoA; oleic acid is a precursor of mycobacterial membrane phospholipids and triglycerides. Is the electron transfer partner for the stearoyl-CoA 9-desaturase DesA3. Catalyzes electron transfer reaction between NADPH and the diiron center of DesA3. Cannot use NADH. This Mycobacterium tuberculosis (strain ATCC 25618 / H37Rv) protein is NADPH oxidoreductase.